The primary structure comprises 156 residues: Small ribosomal subunit protein uS7 (156 aa).

This sequence belongs to the universal ribosomal protein uS7 family. Part of the 30S ribosomal subunit. Contacts proteins S9 and S11.

One of the primary rRNA binding proteins, it binds directly to 16S rRNA where it nucleates assembly of the head domain of the 30S subunit. Is located at the subunit interface close to the decoding center, probably blocks exit of the E-site tRNA. The polypeptide is Small ribosomal subunit protein uS7 (Campylobacter concisus (strain 13826)).